We begin with the raw amino-acid sequence, 174 residues long: Small ribosomal subunit protein uS5c (174 aa).

One can recognise an S5 DRBM domain in the interval Trp-17–Val-80.

Belongs to the universal ribosomal protein uS5 family. In terms of assembly, part of the 30S ribosomal subunit. Contacts protein S4.

It localises to the plastid. The protein resides in the chloroplast. In terms of biological role, with S4 and S12 plays an important role in translational accuracy. The protein is Small ribosomal subunit protein uS5c (rps5) of Porphyra purpurea (Red seaweed).